Reading from the N-terminus, the 66-residue chain is Protein translocase subunit SecE (66 aa).

A helical membrane pass occupies residues 29 to 49 (LIASTLVVVAAVFIFSLICLV).

The protein belongs to the SecE/SEC61-gamma family. In terms of assembly, component of the Sec protein translocase complex. Heterotrimer consisting of SecY, SecE and SecG subunits. The heterotrimers can form oligomers, although 1 heterotrimer is thought to be able to translocate proteins. Interacts with the ribosome. Interacts with SecDF, and other proteins may be involved. Interacts with SecA.

It is found in the cell inner membrane. Its function is as follows. Essential subunit of the Sec protein translocation channel SecYEG. Clamps together the 2 halves of SecY. May contact the channel plug during translocation. In Rickettsia typhi (strain ATCC VR-144 / Wilmington), this protein is Protein translocase subunit SecE.